The primary structure comprises 430 residues: 3-phosphoshikimate 1-carboxyvinyltransferase (430 aa).

3-phosphoshikimate contacts are provided by K20, S21, and R25. K20 is a phosphoenolpyruvate binding site. Phosphoenolpyruvate is bound by residues G92 and R120. 3-phosphoshikimate contacts are provided by S166, Q168, D312, and K339. Q168 provides a ligand contact to phosphoenolpyruvate. D312 acts as the Proton acceptor in catalysis. Positions 343 and 387 each coordinate phosphoenolpyruvate.

It belongs to the EPSP synthase family. Monomer.

It is found in the cytoplasm. It catalyses the reaction 3-phosphoshikimate + phosphoenolpyruvate = 5-O-(1-carboxyvinyl)-3-phosphoshikimate + phosphate. It participates in metabolic intermediate biosynthesis; chorismate biosynthesis; chorismate from D-erythrose 4-phosphate and phosphoenolpyruvate: step 6/7. Functionally, catalyzes the transfer of the enolpyruvyl moiety of phosphoenolpyruvate (PEP) to the 5-hydroxyl of shikimate-3-phosphate (S3P) to produce enolpyruvyl shikimate-3-phosphate and inorganic phosphate. This Lactococcus lactis subsp. cremoris (strain SK11) protein is 3-phosphoshikimate 1-carboxyvinyltransferase.